Consider the following 341-residue polypeptide: Elongation factor G (341 aa).

It belongs to the GTP-binding elongation factor family. EF-G/EF-2 subfamily.

Its subcellular location is the cytoplasm. In terms of biological role, catalyzes the GTP-dependent ribosomal translocation step during translation elongation. During this step, the ribosome changes from the pre-translocational (PRE) to the post-translocational (POST) state as the newly formed A-site-bound peptidyl-tRNA and P-site-bound deacylated tRNA move to the P and E sites, respectively. Catalyzes the coordinated movement of the two tRNA molecules, the mRNA and conformational changes in the ribosome. The polypeptide is Elongation factor G (fus) (Streptomyces ramocissimus).